Consider the following 357-residue polypeptide: Non-structural protein NS2 (357 aa).

2 disordered regions span residues 162–199 (QNER…AKEM) and 228–268 (LDEK…KTHI). Composition is skewed to acidic residues over residues 230-243 (EKDE…EDEE) and 250-260 (DDDEQGEDASD).

This sequence belongs to the orbivirus non-structural protein NS2 family.

Its function is as follows. Single-stranded RNA-binding protein. This is Non-structural protein NS2 (Segment-8) from Antilocapra americana (Pronghorn).